The sequence spans 335 residues: 4-hydroxythreonine-4-phosphate dehydrogenase (335 aa).

Substrate contacts are provided by histidine 135 and threonine 136. Residues histidine 165, histidine 210, and histidine 265 each coordinate a divalent metal cation. Positions 273, 282, and 291 each coordinate substrate.

This sequence belongs to the PdxA family. As to quaternary structure, homodimer. The cofactor is Zn(2+). It depends on Mg(2+) as a cofactor. Co(2+) is required as a cofactor.

The protein localises to the cytoplasm. It catalyses the reaction 4-(phosphooxy)-L-threonine + NAD(+) = 3-amino-2-oxopropyl phosphate + CO2 + NADH. It participates in cofactor biosynthesis; pyridoxine 5'-phosphate biosynthesis; pyridoxine 5'-phosphate from D-erythrose 4-phosphate: step 4/5. In terms of biological role, catalyzes the NAD(P)-dependent oxidation of 4-(phosphooxy)-L-threonine (HTP) into 2-amino-3-oxo-4-(phosphooxy)butyric acid which spontaneously decarboxylates to form 3-amino-2-oxopropyl phosphate (AHAP). The sequence is that of 4-hydroxythreonine-4-phosphate dehydrogenase from Saccharophagus degradans (strain 2-40 / ATCC 43961 / DSM 17024).